The primary structure comprises 355 residues: Lamassu protein LmuA (355 aa).

In terms of biological role, component of antiviral defense system Lamassu type II, composed of LmuA and LmuB. Expression of Lamassu type II in B.subtilis (strain BEST7003) confers resistance to phage SpBeta. May be a nuclease. In Bacillus cereus (strain VD014), this protein is Lamassu protein LmuA.